The primary structure comprises 1045 residues: MGSQPPLGSPLSREEGEAPPPAPASEGRRRSRRVRLRGSCRHRPSFLGCRELAASAPARPAPASSEIMASAAKEFKMDNFSPKAGTSKLQQTVPADASPDSKCPICLDRFDNVSYLDRCLHKFCFRCVQEWSKNKAECPLCKQPFDSIFHSVRAEDDFKEYVLRPSYNGSFVTPDRRFRYRTTLTRERNASVYSPSGPVNRRTTTPPDSGVLFEGLGISTRPRDVEIPQFMRQIAVRRPTTADERSLRKIQEQDIINFRRTLYRAGARVRNIEDGGRYRDISAEFFRRNPACLHRLVPWLKRELTVLFGAHGSLVNIVQHIIMSNVTRYDLESQAFVSDLRPFLLNRTEHFIHEFISFARSPFNMAAFDQHANYDCPAPSYEEGSHSDSSVITISPDEAETQELDINVATVSQAPWDDETPGPSYSSSEQVHVTMSSLLNTSDSSDEELVTGGATSQIQGVQTNDDLNNDSDDSSDNCVIVGFVKPLAERTPELVELSSDSEDLGSYEKMETVKTQEQEQSYSSGDSDVSRCSSPHSVLGKDEQINKGHCDSSTRIKSKKEEKRSTSLSSPRNLNSSVRGDRVYSPYNHRHRKRGRSRSSDSRSQSRSGHDQKNHRKHHGKKRMKSKRSRSRESSRPRGRRDKKRSRTRDSSWSRRSQTLSLSSESTSRSRSRSSDHGKRRSRSRNRDRYYLRNNYGSRYKWEYTYYSRNKDRDGYESSYRRRTLSRAHYSRQSSSPEFRVQSFSERTNARKKNNHSERKYYYYERHRSRSLSSNRSRTASTGTDRVRNEKPGGKRKYKTRHLEGTNEVAQPSREFASKAKDSHYQKSSSKLDGNYKNESDTFSDSRSSDRETKHKRRKRKTRSLSVEIVYEGKATDTTKHHKKKKKKHKKKHKKHHGDNASRSPVVITIDSDSDKDSEVKEDTECDNSGPQDPLQNEFLAPSLEPFETKDVVTIEAEFGVLDKECDIATLSNNLNNANKTVDNIPPLAASVEQTLDVREESTFVSDLENQPSNIVSLQTEPSRQLPSPRTSLMSVCLGRDCDMS.

Residues Met-1 to Arg-35 are disordered. Residues Met-1–Pro-195 are E3 ubiquitin-protein ligase activity. A required for DNA-binding region spans residues Glu-51–Tyr-374. Residues Lys-73, Lys-76, Lys-83, and Lys-88 each participate in a glycyl lysine isopeptide (Lys-Gly) (interchain with G-Cter in SUMO2) cross-link. A Phosphoserine modification is found at Ser-98. The RING-type zinc-finger motif lies at Cys-103–Lys-142. Lys-159 participates in a covalent cross-link: Glycyl lysine isopeptide (Lys-Gly) (interchain with G-Cter in SUMO2). Ser-194 carries the post-translational modification Phosphoserine. Lys-249 participates in a covalent cross-link: Glycyl lysine isopeptide (Lys-Gly) (interchain with G-Cter in SUMO2). Residues Ser-437–Leu-574 form a required for sumoylation and localization to discrete nuclear foci region. Residues Ser-437–Ser-654 are interaction with SUMO1. Residues Ser-442–Ser-475 form a disordered region. A compositionally biased stretch (polar residues) spans Gly-453–Thr-463. The interval Ser-456–Ser-731 is interaction with p53/TP53. The tract at residues Ser-456–His-882 is interaction with TOP1. A Phosphoserine modification is found at Ser-499. The segment at Glu-511–Leu-692 is disordered. Low complexity predominate over residues Ser-521–Ser-534. Over residues Leu-539–Ser-565 the composition is skewed to basic and acidic residues. Lys-560 is covalently cross-linked (Glycyl lysine isopeptide (Lys-Gly) (interchain with G-Cter in SUMO)). The segment covering Thr-566–Val-578 has biased composition (polar residues). At Ser-585 the chain carries Phosphoserine. Basic residues-rich tracts occupy residues Asn-588–Ser-597, Lys-613–Arg-630, and Pro-637–Arg-647. Low complexity predominate over residues Ser-654–Arg-669. Lys-701 is covalently cross-linked (Glycyl lysine isopeptide (Lys-Gly) (interchain with G-Cter in SUMO2)). The segment at Arg-713–Gln-936 is disordered. Phosphoserine; by PLK1 is present on Ser-718. The span at Arg-721–Tyr-730 shows a compositional bias: basic residues. Residues Ser-731–Arg-747 are compositionally biased toward polar residues. Phosphoserine is present on Ser-734. Basic and acidic residues-rich tracts occupy residues Asn-755 to Arg-766 and Phe-816 to Tyr-825. Glycyl lysine isopeptide (Lys-Gly) (interchain with G-Cter in SUMO2) cross-links involve residues Lys-819 and Lys-837. Residues Lys-854–Arg-863 are compositionally biased toward basic residues. The tract at residues Lys-854 to Asp-917 is interaction with UBE2I. Residues Ser-864 and Ser-866 each carry the phosphoserine modification. The span at Lys-880–His-897 shows a compositional bias: basic residues. Phosphoserine occurs at positions 912, 914, and 1028. The segment covering Asp-913 to Asp-923 has biased composition (basic and acidic residues).

Interacts with PARK7/DJ-1. Interacts with TOP1. Interacts with p53/TP53; can both ubiquitinate and sumoylate p53/TP53. Interacts with the SUMO1 conjugating enzyme UBE2I. Interacts with SUMO1. Interacts with NKX3-1; polyubiquitinates NKX3-1 and induces its proteasomal degradation. Interacts with SIN3A; sumoylates SIN3A. Interacts with IKBKE; induced by DNA damage. In terms of processing, phosphorylation at Ser-98 regulates the E3 ubiquitin-protein ligase activity but not the SUMO1-protein ligase activity. Phosphorylation at Ser-718 increases the E3 ubiquitin-protein ligase activity versus the SUMO1-protein ligase activity resulting in increased p53/TP53 ubiquitination and degradation. Sumoylated. Expressed at highest levels in testis and at lower levels in adrenal gland, bone marrow, brain, colon, heart, kidney, liver, muscle, ovary, pancreas, placenta, prostate, skeletal muscle, skin, small intestine, spleen, stomach, testis, thymus, thyroid and uterus. Expressed in the alveolar epithelium of the lung. Expression is commonly decreased in colon adenocarcinomas and lung cancers.

The protein resides in the nucleus. It localises to the PML body. The enzyme catalyses S-ubiquitinyl-[E2 ubiquitin-conjugating enzyme]-L-cysteine + [acceptor protein]-L-lysine = [E2 ubiquitin-conjugating enzyme]-L-cysteine + N(6)-ubiquitinyl-[acceptor protein]-L-lysine.. Its function is as follows. Functions as an E3 ubiquitin-protein ligase and as an E3 SUMO1-protein ligase. Probable tumor suppressor involved in cell growth, cell proliferation and apoptosis that regulates p53/TP53 stability through ubiquitin-dependent degradation. May regulate chromatin modification through sumoylation of several chromatin modification-associated proteins. May be involved in DNA damage-induced cell death through IKBKE sumoylation. In Homo sapiens (Human), this protein is E3 ubiquitin-protein ligase Topors (TOPORS).